Here is a 419-residue protein sequence, read N- to C-terminus: Capsule polysaccharide modification protein LipB (419 aa).

Its subcellular location is the cell inner membrane. Its function is as follows. Involved in the phospholipid modification of the capsular polysaccharide, a strong requirement for its translocation to the cell surface. The protein is Capsule polysaccharide modification protein LipB (lipB) of Neisseria meningitidis serogroup A / serotype 4A (strain DSM 15465 / Z2491).